The chain runs to 170 residues: MAQIRIHEVNTRIENEVEVSKFLQEEGVLYEKWNISKLPPHLNENYSLTDENKAEILAVFSKEIADVSVRRGYKAHDVISLSNSTPNLDELLINFQKEHHHTDDEVRFIVSGHGIFAIEGKDGTFFDVELEPGDLISVPENARHYFTLQDDRQVVAIRIFVTTEGWVPIY.

Residues histidine 99, histidine 101, glutamate 105, and histidine 144 each coordinate Fe(2+). Ni(2+) is bound by residues histidine 99, histidine 101, glutamate 105, and histidine 144.

This sequence belongs to the acireductone dioxygenase (ARD) family. Monomer. Requires Fe(2+) as cofactor. Ni(2+) serves as cofactor.

It catalyses the reaction 1,2-dihydroxy-5-(methylsulfanyl)pent-1-en-3-one + O2 = 3-(methylsulfanyl)propanoate + CO + formate + 2 H(+). The enzyme catalyses 1,2-dihydroxy-5-(methylsulfanyl)pent-1-en-3-one + O2 = 4-methylsulfanyl-2-oxobutanoate + formate + 2 H(+). It participates in amino-acid biosynthesis; L-methionine biosynthesis via salvage pathway; L-methionine from S-methyl-5-thio-alpha-D-ribose 1-phosphate: step 5/6. Its function is as follows. Catalyzes 2 different reactions between oxygen and the acireductone 1,2-dihydroxy-3-keto-5-methylthiopentene (DHK-MTPene) depending upon the metal bound in the active site. Fe-containing acireductone dioxygenase (Fe-ARD) produces formate and 2-keto-4-methylthiobutyrate (KMTB), the alpha-ketoacid precursor of methionine in the methionine recycle pathway. Ni-containing acireductone dioxygenase (Ni-ARD) produces methylthiopropionate, carbon monoxide and formate, and does not lie on the methionine recycle pathway. The chain is Acireductone dioxygenase from Bacillus thuringiensis (strain Al Hakam).